The sequence spans 229 residues: Peroxiredoxin-like 2A (229 aa).

Positions 14 to 112 are thioredoxin fold; that stretch reads MWSIGAGALG…DQLGVPLYAV (99 aa). Residues Cys85 and Cys88 each act as redox-active in the active site.

This sequence belongs to the peroxiredoxin-like PRXL2 family. PRXL2A subfamily. Expressed in CSF1 and TNFSF11-stimulated CD14(+) peripheral blood mononuclear cells (PBMCs).

It localises to the cytoplasm. Its subcellular location is the secreted. Functionally, involved in redox regulation of the cell. Acts as an antioxidant. Inhibits TNFSF11-induced NFKB1 and JUN activation and osteoclast differentiation. May affect bone resorption and help to maintain bone mass. Acts as a negative regulator of macrophage-mediated inflammation by inhibiting macrophage production of inflammatory cytokines, probably through suppression of the MAPK signaling pathway. The sequence is that of Peroxiredoxin-like 2A from Homo sapiens (Human).